The following is a 472-amino-acid chain: Ribulose bisphosphate carboxylase large chain (472 aa).

Substrate contacts are provided by Asn115 and Thr165. Lys167 (proton acceptor) is an active-site residue. Substrate is bound at residue Lys169. Residues Lys193, Asp195, and Glu196 each contribute to the Mg(2+) site. Lys193 carries the post-translational modification N6-carboxylysine. Residue His286 is the Proton acceptor of the active site. 3 residues coordinate substrate: Arg287, His319, and Ser371.

It belongs to the RuBisCO large chain family. Type I subfamily. Heterohexadecamer of 8 large chains and 8 small chains. Mg(2+) is required as a cofactor.

The enzyme catalyses 2 (2R)-3-phosphoglycerate + 2 H(+) = D-ribulose 1,5-bisphosphate + CO2 + H2O. The catalysed reaction is D-ribulose 1,5-bisphosphate + O2 = 2-phosphoglycolate + (2R)-3-phosphoglycerate + 2 H(+). RuBisCO catalyzes two reactions: the carboxylation of D-ribulose 1,5-bisphosphate, the primary event in carbon dioxide fixation, as well as the oxidative fragmentation of the pentose substrate. Both reactions occur simultaneously and in competition at the same active site. This chain is Ribulose bisphosphate carboxylase large chain, found in Solemya velum gill symbiont.